The sequence spans 313 residues: Ribosomal RNA small subunit methyltransferase H (313 aa).

Residues 35 to 37 (GGH), Asp55, Phe79, Asp100, and Gln107 each bind S-adenosyl-L-methionine.

It belongs to the methyltransferase superfamily. RsmH family.

It is found in the cytoplasm. The catalysed reaction is cytidine(1402) in 16S rRNA + S-adenosyl-L-methionine = N(4)-methylcytidine(1402) in 16S rRNA + S-adenosyl-L-homocysteine + H(+). Functionally, specifically methylates the N4 position of cytidine in position 1402 (C1402) of 16S rRNA. This Burkholderia mallei (strain NCTC 10247) protein is Ribosomal RNA small subunit methyltransferase H.